Consider the following 185-residue polypeptide: UPF0397 protein lhv_0999 (185 aa).

5 consecutive transmembrane segments (helical) span residues 11-31 (VVAM…TSIP), 45-65 (FLAL…GFIG), 72-92 (IMYG…GLII), 111-131 (ILLF…VVAP), and 145-165 (VFVQ…VVGT).

Belongs to the UPF0397 family.

The protein resides in the cell membrane. This is UPF0397 protein lhv_0999 from Lactobacillus helveticus (strain DPC 4571).